A 676-amino-acid polypeptide reads, in one-letter code: Lon-like protease BrxL (676 aa).

This sequence belongs to the BrxL family.

Functionally, BREX systems (bacteriophage exclusion) provide immunity against bacteriophage. Part of a type 1 BREX system. This system allows phage adsorption but prevents phage DNA replication, without degradation of the phage DNA. Methylation of bacterial DNA by PglX probably guides self/non-self discrimination. When the brxA-brxB-brxC-pglX and pglZ-brxL operons are transformed into a susceptible B.subtilis strain (BEST7003) they confer resistance to bacteriophages SPbeta, SP16, Zeta, phi3T and SP02 and partial protection to phages SP01 and SP82G (these include lytic and temperate phage). They do not protect against phages phi105, rho10 or rho14. Additionally confers a very slight reduction in efficiency of plasmid transformation. This chain is Lon-like protease BrxL, found in Bacillus cereus (strain H3081.97).